The sequence spans 338 residues: 1-aminocyclopropane-1-carboxylate deaminase (338 aa).

K51 bears the N6-(pyridoxal phosphate)lysine mark. Residue S78 is the Nucleophile of the active site.

This sequence belongs to the ACC deaminase/D-cysteine desulfhydrase family. As to quaternary structure, homotrimer. Pyridoxal 5'-phosphate serves as cofactor.

The enzyme catalyses 1-aminocyclopropane-1-carboxylate + H2O = 2-oxobutanoate + NH4(+). Its function is as follows. Catalyzes a cyclopropane ring-opening reaction, the irreversible conversion of 1-aminocyclopropane-1-carboxylate (ACC) to ammonia and alpha-ketobutyrate. Allows growth on ACC as a nitrogen source. The chain is 1-aminocyclopropane-1-carboxylate deaminase from Pseudomonas fluorescens.